A 1033-amino-acid polypeptide reads, in one-letter code: Isoleucine--tRNA ligase 2 (1033 aa).

The 'HIGH' region motif lies at 47–57 (PTANGLPHVGH). A 'KMSKS' region motif is present at residues 590 to 594 (KMSKS). K593 contacts ATP.

It belongs to the class-I aminoacyl-tRNA synthetase family. IleS type 2 subfamily. In terms of assembly, monomer. Requires Zn(2+) as cofactor.

The protein resides in the cytoplasm. It catalyses the reaction tRNA(Ile) + L-isoleucine + ATP = L-isoleucyl-tRNA(Ile) + AMP + diphosphate. In terms of biological role, catalyzes the attachment of isoleucine to tRNA(Ile). As IleRS can inadvertently accommodate and process structurally similar amino acids such as valine, to avoid such errors it has two additional distinct tRNA(Ile)-dependent editing activities. One activity is designated as 'pretransfer' editing and involves the hydrolysis of activated Val-AMP. The other activity is designated 'posttransfer' editing and involves deacylation of mischarged Val-tRNA(Ile). This chain is Isoleucine--tRNA ligase 2, found in Bacillus cereus (strain ZK / E33L).